Consider the following 480-residue polypeptide: Porphobilinogen deaminase, chloroplastic (480 aa).

The N-terminal 139 residues, 1 to 139 (MYCGRYETIG…VSGGRIWSLA (139 aa)), are a transit peptide targeting the chloroplast. An S-(dipyrrolylmethanemethyl)cysteine modification is found at cysteine 395.

It belongs to the HMBS family. Requires dipyrromethane as cofactor.

It localises to the plastid. It is found in the chloroplast. The catalysed reaction is 4 porphobilinogen + H2O = hydroxymethylbilane + 4 NH4(+). It participates in porphyrin-containing compound metabolism; protoporphyrin-IX biosynthesis; coproporphyrinogen-III from 5-aminolevulinate: step 2/4. Its pathway is porphyrin-containing compound metabolism; chlorophyll biosynthesis. In terms of biological role, tetrapolymerization of the monopyrrole PBG into the hydroxymethylbilane pre-uroporphyrinogen in several discrete steps. This is Porphobilinogen deaminase, chloroplastic from Euglena gracilis.